Reading from the N-terminus, the 952-residue chain is Eukaryotic initiation factor 4F subunit p150 (952 aa).

3 disordered regions span residues 1–77 (MTDE…NYNG), 115–389 (GSAP…DAGT), and 481–575 (VIPP…LVPS). Over residues 7–16 (HPTQSASKQE) the composition is skewed to polar residues. A compositionally biased stretch (low complexity) spans 29-46 (ESQQQRGYTNYNNGSNYT). Residues 47–56 (QKKPYNSNRP) show a composition bias toward polar residues. The segment covering 65–74 (GPNRYNNRGN) has biased composition (low complexity). The segment covering 140 to 151 (SGEHLDLKEQHK) has biased composition (basic and acidic residues). The span at 154-166 (LQSQERSTVSPQP) shows a compositional bias: polar residues. Serine 163 is subject to Phosphoserine. The span at 175–191 (DSTSTSTPTPTPSTNDS) shows a compositional bias: low complexity. Threonine 181 bears the Phosphothreonine mark. Residues 188 to 299 (TNDSKASSEE…KEESTPKVLT (112 aa)) are interaction with PAB1. A Phosphoserine modification is found at serine 195. Over residues 218–228 (AALEKKRKEQL) the composition is skewed to basic and acidic residues. A compositionally biased stretch (polar residues) spans 229-244 (EGSSGNNNIPMKTTPE). Composition is skewed to basic and acidic residues over residues 246–276 (VEEK…KQET), 283–294 (QGEKGQIKEEST), and 309–333 (QQKE…ETKS). Over residues 355-368 (TEQSNIDESATTPA) the composition is skewed to polar residues. Phosphoserine is present on serine 503. Basic and acidic residues-rich tracts occupy residues 504–521 (RGHD…DRAN) and 532–569 (RMND…KEEV). The MIF4G domain maps to 607–850 (ERKMKSLLNK…IDIKELRHDK (244 aa)). The interval 870–952 (EEERQRQLKN…ALMGESDDEE (83 aa)) is disordered. The segment covering 879–894 (NNSRSNSRRTNNSSNR) has biased composition (low complexity). Phosphoserine is present on serine 883. At threonine 888 the chain carries Phosphothreonine. Phosphoserine is present on residues serine 892, serine 896, serine 908, and serine 948. A compositionally biased stretch (polar residues) spans 908-922 (SFITTRTYSQRNSQR).

This sequence belongs to the eukaryotic initiation factor 4G family. As to quaternary structure, component of the eIF4F complex, which composition varies with external and internal environmental conditions. It is composed of at least eIF4A (TIF1/TIF2), eIF4E (TIF45) and eIF4G (TIF4631 or TIF4632). Interacts with PAT1 in a RNA-dependent manner.

Its subcellular location is the cytoplasm. The protein resides in the P-body. The protein localises to the stress granule. Component of the eIF4F complex, which interacts with the mRNA cap structure and serves as an initial point of assembly for the translation apparatus. Stimulates translation by interaction with polyadenylate-binding protein PAB1, bringing the 5'- and 3'-ends of the mRNA in proximity. The formation of this circular mRNP structure appears to be critical for the synergistic effects of the cap and the poly(A) tail in facilitating translation initiation, recycling of ribosomes, and mRNA stability. TIF4631 is probably essential when TIF4632 is missing. The protein is Eukaryotic initiation factor 4F subunit p150 of Saccharomyces cerevisiae (strain ATCC 204508 / S288c) (Baker's yeast).